Reading from the N-terminus, the 1482-residue chain is MQKSPLERASVISKLFFSWPGPILRKGYRQHLKLSDIYQIPSVDSADNLSEKLEREWDRELASKKNPKLINALRRCFFWRFVFYGILLYLGEVTKAVQPLLLGRIIASYDPDNKVERSIAIYLAIGLCLLFIVRTLLLHPAIFGLHHMGMQMRIAMFSLIYKKTLKLSSRVLDKISIGQLVSLLSNNLNKFDEGLALAHFVWIAPLQVTLLMGLIWDLLQASAFCGLAFLIIVALGQAGLGRMMMKYRDKRAGKINERLVITSEMIENIQSVKAYCWEEAMEKMIENLRQIELRLTRKAAYVRYFNSAAFFFSGFFVVFLSVLPYAMLKGIILRKIFTTISFCIVLRMAVTRQFPWAVQTWYDSLGAINKIQDFLQKQEYKTLEYNLTTTDVVMENVTAFWEEGFGELFEKAKQNNNNREISNGDNSLFFSNFSLLGAPVLKDINFKIERGQLLAVAGSTGAGKTSLLMMIMGELEPSEGKIKHSGRISFCSQFSWIMPGTIKENIIFGVSYDEYRYRSVIKACQLEEDISKFAEKDNIVLGEGGITLSGGQRARISLARAVYKDADLYLLDSPFGYLDVLTEKEIFESCVCKLMANKTRILVTSKMEHLKKADKILILHEGSSYFYGTFSELQTLRPDFSSELMGYDSFDQFSAERRNSILTETLRRFSLEGDTVSWNETKKQSFKQAGEFGEKRKNSILNSINSIRKFSVVQKTPLQMNGIDEDSDEPLERRLSLVPDSEQGEAILPRSNVINTGPTFQRRRRQSVLNLMTRPSINQGQNIHRRTAASARKMSLAPQANLTEMDIYSRRLSQDSGLEISEEINEEDLKECFFDDVENMPPVTTWNTYLRYVTVHKSLIFVLIWCLVVFLAEVAVSLVVLYLLRTSSLQDKGNNTTVNANSSYGVIVTNTSSYYLLYIYVGIADSLFALAIFRGLPLVHTLIKVSKTLHHKMLRSILQAPMSTFNTLKAGRILNRFSKDIAILDDLLPLTMFDFIQLLLIVIGAVVVVSVLQPYIFLATVPVIAAFIILRAYFLHTSQQLKQLESEARSPIFTHLVTSVKGLWTLRAFGRQPYFETLFHKALNLHTANWFLYLSTLRWFQMRIEIIFVIFFIAVTFVSILTTGEGEGTIGIILTLAMNIMNTLQWAVNSSIDVDSLMRSVSRIFKFIDMPTEESKPAKSVKPPKDGQLSKVMIIENQHVKKDYNWPSGGHMTVKDLTAKYIDGGNAILENISFSISPGQRVGLLGRTGSGKSTLLSAFLRLLNTEGEIQIDGVSWDSITLQQWRKAFGVIPQKVFIFSGTFRKNLDPYEQCSDQEIWKVADEVGLRSVIEQFPGKLDFVLVDGGYVLSHGHKQLMCLARSVLSKAKILLLDEPSAHLDPITYQIIRRTLKQAFADCTVILCEHRVEAMLECQQFLVIEENTVRQYDSIQKLLNEKSLFRQAISPLDRMKLLPHRNSSRHRSRSQIAALKEETEEEVQETRL.

Residues 1-77 are Cytoplasmic-facing; that stretch reads MQKSPLERAS…KLINALRRCF (77 aa). Residues 78–98 form a helical membrane-spanning segment; it reads FWRFVFYGILLYLGEVTKAVQ. The ABC transmembrane type-1 1 domain maps to 81-365; sequence FVFYGILLYL…WAVQTWYDSL (285 aa). Residues 99–122 are Extracellular-facing; the sequence is PLLLGRIIASYDPDNKVERSIAIY. Residues 123–146 form a helical membrane-spanning segment; sequence LAIGLCLLFIVRTLLLHPAIFGLH. Topologically, residues 147–195 are cytoplasmic; sequence HMGMQMRIAMFSLIYKKTLKLSSRVLDKISIGQLVSLLSNNLNKFDEGL. Residues 196 to 216 form a helical membrane-spanning segment; the sequence is ALAHFVWIAPLQVTLLMGLIW. Topologically, residues 217–222 are extracellular; it reads DLLQAS. The helical transmembrane segment at 223–243 threads the bilayer; that stretch reads AFCGLAFLIIVALGQAGLGRM. At 244–298 the chain is on the cytoplasmic side; that stretch reads MMKYRDKRAGKINERLVITSEMIENIQSVKAYCWEEAMEKMIENLRQIELRLTRK. The helical transmembrane segment at 299-319 threads the bilayer; it reads AAYVRYFNSAAFFFSGFFVVF. Over 320–339 the chain is Extracellular; the sequence is LSVLPYAMLKGIILRKIFTT. The chain crosses the membrane as a helical span at residues 340 to 358; the sequence is ISFCIVLRMAVTRQFPWAV. The Cytoplasmic portion of the chain corresponds to 359-858; the sequence is QTWYDSLGAI…YLRYVTVHKS (500 aa). ATP-binding positions include Trp401, Ser434, 458 to 465, and Gln493; that span reads GSTGAGKT. An ABC transporter 1 domain is found at 423–646; sequence NGDNSLFFSN…RPDFSSELMG (224 aa). A lipid anchor (S-palmitoyl cysteine) is attached at Cys524. 2 positions are modified to phosphoserine: Ser549 and Ser660. The segment at 654–831 is disordered R region; that stretch reads SAERRNSILT…EEINEEDLKE (178 aa). The residue at position 670 (Ser670) is a Phosphoserine; by PKA. Ser685 is subject to Phosphoserine. Lys687 participates in a covalent cross-link: Glycyl lysine isopeptide (Lys-Gly) (interchain with G-Cter in ubiquitin). Phosphoserine is present on residues Ser699 and Ser711. The residue at position 716 (Thr716) is a Phosphothreonine. 5 positions are modified to phosphoserine: Ser736, Ser767, Ser790, Ser795, and Ser813. Residues 859–879 traverse the membrane as a helical segment; that stretch reads LIFVLIWCLVVFLAEVAVSLV. In terms of domain architecture, ABC transmembrane type-1 2 spans 859–1156; that stretch reads LIFVLIWCLV…AVNSSIDVDS (298 aa). Residues 880 to 919 are Extracellular-facing; the sequence is VLYLLRTSSLQDKGNNTTVNANSSYGVIVTNTSSYYLLYI. Asn894, Asn895, Asn901, and Asn910 each carry an N-linked (GlcNAc...) asparagine glycan. The chain crosses the membrane as a discontinuously helical span at residues 920–940; the sequence is YVGIADSLFALAIFRGLPLVH. The Cytoplasmic segment spans residues 941–991; that stretch reads TLIKVSKTLHHKMLRSILQAPMSTFNTLKAGRILNRFSKDIAILDDLLPLT. The chain crosses the membrane as a helical span at residues 992-1012; that stretch reads MFDFIQLLLIVIGAVVVVSVL. At 1013–1014 the chain is on the extracellular side; sequence QP. The helical transmembrane segment at 1015–1035 threads the bilayer; that stretch reads YIFLATVPVIAAFIILRAYFL. Topologically, residues 1036-1096 are cytoplasmic; that stretch reads HTSQQLKQLE…TANWFLYLST (61 aa). A helical membrane pass occupies residues 1097–1117; that stretch reads LRWFQMRIEIIFVIFFIAVTF. Topologically, residues 1118–1131 are extracellular; that stretch reads VSILTTGEGEGTIG. The chain crosses the membrane as a helical span at residues 1132–1152; sequence IILTLAMNIMNTLQWAVNSSI. Residues 1153–1482 lie on the Cytoplasmic side of the membrane; the sequence is DVDSLMRSVS…TEEEVQETRL (330 aa). The 234-residue stretch at 1212 to 1445 folds into the ABC transporter 2 domain; that stretch reads MTVKDLTAKY…KSLFRQAISP (234 aa). ATP-binding positions include Tyr1221 and 1246-1253; that span reads GRTGSGKS. The interaction with GORASP2 stretch occupies residues 1388–1482; that stretch reads RTLKQAFADC…TEEEVQETRL (95 aa). Cys1397 carries S-palmitoyl cysteine lipidation. Positions 1454–1463 are enriched in basic residues; that stretch reads HRNSSRHRSR. Positions 1454-1482 are disordered; it reads HRNSSRHRSRSQIAALKEETEEEVQETRL. At Ser1458 the chain carries Phosphoserine. Acidic residues predominate over residues 1472-1482; sequence ETEEEVQETRL. Positions 1480–1482 match the PDZ-binding motif; that stretch reads TRL.

Belongs to the ABC transporter superfamily. ABCC family. CFTR transporter (TC 3.A.1.202) subfamily. In terms of assembly, monomer; does not require oligomerization for channel activity. May form oligomers in the membrane. Interacts with SLC26A3, SLC26A6 and NHERF1. Interacts with SHANK2. Interacts with MYO6. Interacts (via C-terminus) with GOPC (via PDZ domain); this promotes CFTR internalization and thereby decreases channel activity. Interacts with SLC4A7 through NHERF1. Found in a complex with MYO5B and RAB11A. Interacts with ANO1. Interacts with SLC26A8. Interacts with AHCYL1; the interaction increases CFTR activity. Interacts with CSE1L. The core-glycosylated form interacts with GORASP2 (via PDZ GRASP-type 1 domain) in respone to ER stress. Interacts with MARCHF2; the interaction leads to CFTR ubiqtuitination and degradation. Interacts with ADGRG2. In terms of processing, N-glycosylated. Post-translationally, phosphorylated; cAMP treatment promotes phosphorylation and activates the channel. Dephosphorylation decreases the ATPase activity (in vitro). Phosphorylation at PKA sites activates the channel. Phosphorylation at PKC sites enhances the response to phosphorylation by PKA. Phosphorylated by AMPK; this inhibits channel activity. Ubiquitinated, leading to its degradation in the lysosome. Deubiquitination by USP10 in early endosomes enhances its endocytic recycling to the cell membrane. Ubiquitinated by RNF185 during ER stress. Ubiquitinated by MARCHF2.

It is found in the apical cell membrane. The protein localises to the early endosome membrane. Its subcellular location is the cell membrane. It localises to the recycling endosome membrane. The protein resides in the endoplasmic reticulum membrane. It is found in the nucleus. The catalysed reaction is ATP + H2O + closed Cl(-) channel = ADP + phosphate + open Cl(-) channel.. The enzyme catalyses chloride(in) = chloride(out). It carries out the reaction hydrogencarbonate(in) = hydrogencarbonate(out). It catalyses the reaction ATP + H2O = ADP + phosphate + H(+). Epithelial ion channel that plays an important role in the regulation of epithelial ion and water transport and fluid homeostasis. Mediates the transport of chloride ions across the cell membrane. Possesses an intrinsic ATPase activity and utilizes ATP to gate its channel; the passive flow of anions through the channel is gated by cycles of ATP binding and hydrolysis by the ATP-binding domains. The ion channel is also permeable to HCO(3)(-); selectivity depends on the extracellular chloride concentration. Exerts its function also by modulating the activity of other ion channels and transporters. Contributes to the regulation of the pH and the ion content of the epithelial fluid layer. Modulates the activity of the epithelial sodium channel (ENaC) complex, in part by regulating the cell surface expression of the ENaC complex. May regulate bicarbonate secretion and salvage in epithelial cells by regulating the transporter SLC4A7. Can inhibit the chloride channel activity of ANO1. Plays a role in the chloride and bicarbonate homeostasis during sperm epididymal maturation and capacitation. The polypeptide is Cystic fibrosis transmembrane conductance regulator (Loxodonta africana (African elephant)).